Here is a 328-residue protein sequence, read N- to C-terminus: Ribosomal RNA small subunit methyltransferase H (328 aa).

S-adenosyl-L-methionine is bound by residues 35-37 (GSH), aspartate 60, phenylalanine 87, aspartate 113, and glutamine 120.

Belongs to the methyltransferase superfamily. RsmH family.

Its subcellular location is the cytoplasm. It catalyses the reaction cytidine(1402) in 16S rRNA + S-adenosyl-L-methionine = N(4)-methylcytidine(1402) in 16S rRNA + S-adenosyl-L-homocysteine + H(+). Specifically methylates the N4 position of cytidine in position 1402 (C1402) of 16S rRNA. This chain is Ribosomal RNA small subunit methyltransferase H, found in Chlorobium chlorochromatii (strain CaD3).